The following is a 236-amino-acid chain: Biosynthetic peptidoglycan transglycosylase (236 aa).

The helical transmembrane segment at 12 to 31 threads the bilayer; that stretch reads ALLWFVAGSIVLVLVFRWVP.

This sequence belongs to the glycosyltransferase 51 family.

The protein localises to the cell inner membrane. It carries out the reaction [GlcNAc-(1-&gt;4)-Mur2Ac(oyl-L-Ala-gamma-D-Glu-L-Lys-D-Ala-D-Ala)](n)-di-trans,octa-cis-undecaprenyl diphosphate + beta-D-GlcNAc-(1-&gt;4)-Mur2Ac(oyl-L-Ala-gamma-D-Glu-L-Lys-D-Ala-D-Ala)-di-trans,octa-cis-undecaprenyl diphosphate = [GlcNAc-(1-&gt;4)-Mur2Ac(oyl-L-Ala-gamma-D-Glu-L-Lys-D-Ala-D-Ala)](n+1)-di-trans,octa-cis-undecaprenyl diphosphate + di-trans,octa-cis-undecaprenyl diphosphate + H(+). Its pathway is cell wall biogenesis; peptidoglycan biosynthesis. Its function is as follows. Peptidoglycan polymerase that catalyzes glycan chain elongation from lipid-linked precursors. The protein is Biosynthetic peptidoglycan transglycosylase of Pseudomonas putida (strain ATCC 700007 / DSM 6899 / JCM 31910 / BCRC 17059 / LMG 24140 / F1).